We begin with the raw amino-acid sequence, 132 residues long: Acid shock protein (132 aa).

Positions 1-21 are cleaved as a signal peptide; that stretch reads MKKVLALVVAAAMGLSSAAFA. A compositionally biased stretch (low complexity) spans 20–45; that stretch reads FAAETTTSSAAPATATATTTKAAPAK. Residues 20 to 132 are disordered; sequence FAAETTTSSA…AAKPAAQPAA (113 aa). A propeptide spanning residues 22–90 is cleaved from the precursor; it reads AETTTSSAAP…TTAPVEQKAQ (69 aa). Over residues 62-71 the composition is skewed to basic residues; it reads AAKKHHKKAV. 2 stretches are compositionally biased toward low complexity: residues 76-90 and 100-109; these read AAPA…QKAQ and AKPAVAQKAQ. Residues 110-119 show a composition bias toward basic residues; sequence AAKKHHKKAV.

The protein belongs to the Asr family. Proteolytic processing gives rise to the active protein.

The protein resides in the periplasm. In terms of biological role, required for growth and/or survival at acidic conditions. The protein is Acid shock protein of Enterobacter sp. (strain 638).